The primary structure comprises 120 residues: Ribosome-binding factor A (120 aa).

It belongs to the RbfA family. Monomer. Binds 30S ribosomal subunits, but not 50S ribosomal subunits or 70S ribosomes.

It is found in the cytoplasm. One of several proteins that assist in the late maturation steps of the functional core of the 30S ribosomal subunit. Associates with free 30S ribosomal subunits (but not with 30S subunits that are part of 70S ribosomes or polysomes). Required for efficient processing of 16S rRNA. May interact with the 5'-terminal helix region of 16S rRNA. The protein is Ribosome-binding factor A of Rickettsia rickettsii (strain Iowa).